The primary structure comprises 201 residues: Recombination protein RecR (201 aa).

The C4-type zinc finger occupies 60–75 (CSVCGNVDTIDPCSIC). The Toprim domain maps to 83–178 (ATIIVVEDIA…KVTRLAHGVP (96 aa)).

This sequence belongs to the RecR family.

Its function is as follows. May play a role in DNA repair. It seems to be involved in an RecBC-independent recombinational process of DNA repair. It may act with RecF and RecO. The sequence is that of Recombination protein RecR from Bartonella henselae (strain ATCC 49882 / DSM 28221 / CCUG 30454 / Houston 1) (Rochalimaea henselae).